The following is a 565-amino-acid chain: Oxygen-dependent choline dehydrogenase (565 aa).

FAD is bound at residue 7–36 (DYIICGAGSAGNVLATRLTEDPGVTVLLLE). His474 functions as the Proton acceptor in the catalytic mechanism.

It belongs to the GMC oxidoreductase family. FAD is required as a cofactor.

It carries out the reaction choline + A = betaine aldehyde + AH2. It catalyses the reaction betaine aldehyde + NAD(+) + H2O = glycine betaine + NADH + 2 H(+). It functions in the pathway amine and polyamine biosynthesis; betaine biosynthesis via choline pathway; betaine aldehyde from choline (cytochrome c reductase route): step 1/1. Functionally, involved in the biosynthesis of the osmoprotectant glycine betaine. Catalyzes the oxidation of choline to betaine aldehyde and betaine aldehyde to glycine betaine at the same rate. This Burkholderia pseudomallei (strain K96243) protein is Oxygen-dependent choline dehydrogenase.